The chain runs to 96 residues: ITLLNVSKLNLLRLALGGHVGRFCIWTESSFRKLDDLYGTWRKSAKLKADYNLPMHKMTNTDLTRILKSQEIQRALRAPNKKVKRRELKKNPLKNL.

Residues 77 to 96 are disordered; the sequence is RAPNKKVKRRELKKNPLKNL. The span at 79-96 shows a compositional bias: basic residues; the sequence is PNKKVKRRELKKNPLKNL.

This sequence belongs to the universal ribosomal protein uL4 family. As to quaternary structure, component of the large ribosomal subunit.

It localises to the cytoplasm. Component of the large ribosomal subunit. The ribosome is a large ribonucleoprotein complex responsible for the synthesis of proteins in the cell. The sequence is that of Large ribosomal subunit protein uL4 (rpl4) from Xenopus tropicalis (Western clawed frog).